The sequence spans 174 residues: Probable adenylyl-sulfate kinase (174 aa).

10–17 is an ATP binding site; that stretch reads GPSGAGKT. Ser-84 (phosphoserine intermediate) is an active-site residue.

It belongs to the APS kinase family.

It carries out the reaction adenosine 5'-phosphosulfate + ATP = 3'-phosphoadenylyl sulfate + ADP + H(+). The protein operates within sulfur metabolism; hydrogen sulfide biosynthesis; sulfite from sulfate: step 2/3. Catalyzes the synthesis of activated sulfate. This chain is Probable adenylyl-sulfate kinase (cysC), found in Pyrococcus abyssi (strain GE5 / Orsay).